The primary structure comprises 205 residues: Thymidylate kinase (205 aa).

Residue 13 to 20 (GIDGSGKS) coordinates ATP.

This sequence belongs to the thymidylate kinase family.

The catalysed reaction is dTMP + ATP = dTDP + ADP. In terms of biological role, phosphorylation of dTMP to form dTDP in both de novo and salvage pathways of dTTP synthesis. This chain is Thymidylate kinase, found in Leptospira borgpetersenii serovar Hardjo-bovis (strain L550).